The following is a 280-amino-acid chain: Octanoyltransferase LIP2p2, chloroplastic (280 aa).

Residues 1–34 (MVFSVATSSVTNPKLHHHHHLSDFNRNRVSTSLK) constitute a chloroplast transit peptide. A BPL/LPL catalytic domain is found at 81–270 (QECSDSLIIL…EFSEVFQLQM (190 aa)). Substrate contacts are provided by residues 123 to 130 (RGGEVTYH), 191 to 193 (AIG), and 204 to 206 (GLA). Cys222 functions as the Acyl-thioester intermediate in the catalytic mechanism.

It belongs to the LipB family. Expressed in roots, leaves, cauline leaves, stems, siliques and flowers.

It is found in the plastid. The protein resides in the chloroplast. It catalyses the reaction octanoyl-[ACP] + L-lysyl-[protein] = N(6)-octanoyl-L-lysyl-[protein] + holo-[ACP] + H(+). Its pathway is protein modification; protein lipoylation via endogenous pathway; protein N(6)-(lipoyl)lysine from octanoyl-[acyl-carrier-protein]: step 1/2. Functionally, catalyzes the transfer of endogenously produced octanoic acid from octanoyl-acyl-carrier-protein onto the lipoyl domains of lipoate-dependent enzymes. Lipoyl-ACP can also act as a substrate although octanoyl-ACP is likely to be the physiological substrate. Together with LIP1P is essential for de novo plastidial protein lipoylation during seed development. Acts redundantly with LIP2P. In Arabidopsis thaliana (Mouse-ear cress), this protein is Octanoyltransferase LIP2p2, chloroplastic.